A 527-amino-acid chain; its full sequence is UDP-glucuronosyltransferase 2A1 (527 aa).

Residues 1 to 20 (MLKNILLWSLQLSLLGMSLG) form the signal peptide. Residues 21 to 490 (GNVLIWPMEG…LSWFQYHSLD (470 aa)) lie on the Extracellular side of the membrane. N49 carries N-linked (GlcNAc...) asparagine glycosylation. N6-succinyllysine is present on K134. N313 carries an N-linked (GlcNAc...) asparagine glycan. The chain crosses the membrane as a helical span at residues 491–507 (VIGFLLACMASAILLVI). Residues 508–527 (KCCLFVFQKIGKTXKKNKRD) are Cytoplasmic-facing.

It belongs to the UDP-glycosyltransferase family. Olfactory epithelium. Mainly found in the sustentacular cells and to a lesser extent in Bowman's gland cells. Also expressed in the olfactory sensory neuron nuclei. Neuronal localization within the olfactory bulb is mainly found in the deeper granular cells.

It localises to the membrane. The enzyme catalyses glucuronate acceptor + UDP-alpha-D-glucuronate = acceptor beta-D-glucuronoside + UDP + H(+). It catalyses the reaction 16beta,17beta-estriol + UDP-alpha-D-glucuronate = 16beta,17beta-estriol 16-O-(beta-D-glucuronate) + UDP + H(+). The catalysed reaction is 16alpha,17alpha-estriol + UDP-alpha-D-glucuronate = 16alpha,17alpha-estriol 16-O-(beta-D-glucuronate) + UDP + H(+). It carries out the reaction 17alpha-estradiol + UDP-alpha-D-glucuronate = 17alpha-estradiol 17-O-(beta-D-glucuronate) + UDP + H(+). The enzyme catalyses 17alpha-estradiol + UDP-alpha-D-glucuronate = 17alpha-estradiol 3-O-(beta-D-glucuronate) + UDP + H(+). It catalyses the reaction 17beta-estradiol + UDP-alpha-D-glucuronate = 17beta-estradiol 3-O-(beta-D-glucuronate) + UDP + H(+). The catalysed reaction is 17beta-estradiol + UDP-alpha-D-glucuronate = 17beta-estradiol 17-O-(beta-D-glucuronate) + UDP + H(+). It carries out the reaction testosterone + UDP-alpha-D-glucuronate = testosterone 17-O-(beta-D-glucuronate) + UDP + H(+). The enzyme catalyses epitestosterone + UDP-alpha-D-glucuronate = epitestosterone 17-O-(beta-D-glucuronate) + UDP + H(+). It catalyses the reaction lithocholate + UDP-alpha-D-glucuronate = lithocholoyl-3-O-(beta-D-glucuronate) + UDP + H(+). The catalysed reaction is lithocholate + UDP-alpha-D-glucuronate = lithocholoyl-24-O-(beta-D-glucuronate) + UDP. It carries out the reaction deoxycholate + UDP-alpha-D-glucuronate = deoxycholoyl-24-O-(beta-D-glucuronate) + UDP. The enzyme catalyses hyodeoxycholate + UDP-alpha-D-glucuronate = hyodeoxycholate 6-O-(beta-D-glucuronate) + UDP + H(+). It catalyses the reaction hyocholate + UDP-alpha-D-glucuronate = hyocholoyl-24-O-(beta-D-glucuronate) + UDP. UDP-glucuronosyltransferase (UGT) that catalyzes phase II biotransformation reactions in which lipophilic substrates are conjugated with glucuronic acid to increase the metabolite's water solubility, thereby facilitating excretion into either the urine or bile. Essential for the elimination and detoxification of drugs, xenobiotics and endogenous compounds. Catalyzes the glucuronidation of endogenous steroid hormones such as androgens (testosterones) and estrogens (estradiol and estriol). Contributes to bile acid (BA) detoxification by catalyzing the glucuronidation of BA substrates, which are natural detergents for dietary lipids absorption. Shows a high affinity to aliphatic odorants such as citronellol as well as olfactory tissue specificity, and therefore may be involved in olfaction. The chain is UDP-glucuronosyltransferase 2A1 from Rattus norvegicus (Rat).